The chain runs to 359 residues: MAAEGKNVLIMAGGTGGHVFPALACAREFQKRGYSVHWLGTPRGIENELVPQAGLPLHLIQVSGLRGKGKLSLLKAPFTLVKAVLQARRIIRQLKPVCVLGFGGYVTGPGGVAARLCGVPLVIHEQNARAGTANRLLVPLSARVCEAFPNTFEASDKRRTTGNPVRPELFMDAQRVPLGERRARLLVLGGSLGAEPLNKLLPKALSEVPAALRPEVFHQAGKQHAPITAERYHEVGVEAQVEPFINDMAQAYGWADLVVCRAGALTVSELAAAGLPSMLVPLPHAIDDHQTHNAQYLAREGAAFLMPQATTGAAQLAERLNEVLMQPEKLNVMAGTARRLAKPAATSTVVDICLEVAHG.

UDP-N-acetyl-alpha-D-glucosamine-binding positions include 15 to 17 (TGG), N127, R166, S191, I245, 264 to 269 (ALTVSE), and Q290.

It belongs to the glycosyltransferase 28 family. MurG subfamily.

It localises to the cell inner membrane. It catalyses the reaction di-trans,octa-cis-undecaprenyl diphospho-N-acetyl-alpha-D-muramoyl-L-alanyl-D-glutamyl-meso-2,6-diaminopimeloyl-D-alanyl-D-alanine + UDP-N-acetyl-alpha-D-glucosamine = di-trans,octa-cis-undecaprenyl diphospho-[N-acetyl-alpha-D-glucosaminyl-(1-&gt;4)]-N-acetyl-alpha-D-muramoyl-L-alanyl-D-glutamyl-meso-2,6-diaminopimeloyl-D-alanyl-D-alanine + UDP + H(+). Its pathway is cell wall biogenesis; peptidoglycan biosynthesis. Its function is as follows. Cell wall formation. Catalyzes the transfer of a GlcNAc subunit on undecaprenyl-pyrophosphoryl-MurNAc-pentapeptide (lipid intermediate I) to form undecaprenyl-pyrophosphoryl-MurNAc-(pentapeptide)GlcNAc (lipid intermediate II). The protein is UDP-N-acetylglucosamine--N-acetylmuramyl-(pentapeptide) pyrophosphoryl-undecaprenol N-acetylglucosamine transferase of Pseudomonas putida (strain ATCC 700007 / DSM 6899 / JCM 31910 / BCRC 17059 / LMG 24140 / F1).